The following is a 420-amino-acid chain: Transcription activator GLK1 (420 aa).

The disordered stretch occupies residues 74–152; that stretch reads GDFSNHMNAS…NRISNNEGKR (79 aa). Basic and acidic residues predominate over residues 106-117; it reads KGEEVVSKRDDV. Residues 135-147 are compositionally biased toward low complexity; it reads SSSASSKNNRISN. Positions 150 to 209 form a DNA-binding region, myb-like GARP; it reads GKRKVKVDWTPELHRRFVEAVEQLGVDKAVPSRILELMGVHCLTRHNVASHLQKYRSHRK.

Interacts with NAC92. As to expression, expressed in rosette and cauline leaves. Expressed at low levels in cotyledons and shoots.

The protein resides in the nucleus. Transcriptional activator that functions with GLK2 to promote chloroplast development. Acts as an activator of nuclear photosynthetic genes involved in chlorophyll biosynthesis, light harvesting, and electron transport. Acts in a cell-autonomous manner to coordinate and maintain the photosynthetic apparatus within individual cells. May function in photosynthetic capacity optimization by integrating responses to variable environmental and endogenous cues. Prevents premature senescence. This chain is Transcription activator GLK1 (GLK1), found in Arabidopsis thaliana (Mouse-ear cress).